The following is a 160-amino-acid chain: Large ribosomal subunit protein uL15 (160 aa).

A compositionally biased stretch (basic and acidic residues) spans 1–13 (MKLNELRDNEGAA). Residues 1–51 (MKLNELRDNEGAARKKKRVARGPGSGKGKTAGRGIKGQKSRSGVALNGYEG) form a disordered region. Residues 23–35 (PGSGKGKTAGRGI) show a composition bias toward gly residues.

It belongs to the universal ribosomal protein uL15 family. Part of the 50S ribosomal subunit.

In terms of biological role, binds to the 23S rRNA. The protein is Large ribosomal subunit protein uL15 of Cereibacter sphaeroides (strain ATCC 17025 / ATH 2.4.3) (Rhodobacter sphaeroides).